Reading from the N-terminus, the 371-residue chain is DNA replication and repair protein RecF (371 aa).

Position 30-37 (G30–T37) interacts with ATP.

The protein belongs to the RecF family.

It is found in the cytoplasm. In terms of biological role, the RecF protein is involved in DNA metabolism; it is required for DNA replication and normal SOS inducibility. RecF binds preferentially to single-stranded, linear DNA. It also seems to bind ATP. This Chlorobium phaeovibrioides (strain DSM 265 / 1930) (Prosthecochloris vibrioformis (strain DSM 265)) protein is DNA replication and repair protein RecF.